The chain runs to 872 residues: Protein SEY1 (872 aa).

At 1–749 (MVANGHFAGV…KRSAIGGITQ (749 aa)) the chain is on the cytoplasmic side. Positions 49-294 (GFNYHLISVF…IEGGIFLPEY (246 aa)) constitute a GB1/RHD3-type G domain. Position 59–66 (59–66 (GSQSTGKS)) interacts with GTP. The stretch at 482 to 504 (SNYQQELSLYQKDLENIGGQLRR) forms a coiled coil. The tract at residues 676–704 (LDKWIGHTPSSATPADEEDLTPIGGVDED) is disordered. The segment covering 690 to 704 (ADEEDLTPIGGVDED) has biased composition (acidic residues). A helical membrane pass occupies residues 750 to 770 (VPLYFYGLLLALGWNEIVAVL). The Lumenal segment spans residues 771–773 (RNP). A helical transmembrane segment spans residues 774–794 (AYFLLLFVCAVTAYVTYQLNL). Topologically, residues 795–872 (WGPIIKMTEA…IDDADDDDDF (78 aa)) are cytoplasmic. The segment at 849–872 (NRKSAGGFQNNRSHIDDADDDDDF) is disordered.

Belongs to the TRAFAC class dynamin-like GTPase superfamily. GB1/RHD3 GTPase family. RHD3 subfamily.

The protein localises to the endoplasmic reticulum membrane. Its function is as follows. Cooperates with the reticulon proteins and tubule-shaping DP1 family proteins to generate and maintain the structure of the tubular endoplasmic reticulum network. Has GTPase activity, which is required for its function in ER organization. This chain is Protein SEY1, found in Paracoccidioides brasiliensis (strain Pb03).